Here is a 223-residue protein sequence, read N- to C-terminus: AMSH-like ubiquitin thioesterase 2 (223 aa).

Positions 49–177 (VHISERLLED…YGIFKLTDPG (129 aa)) constitute an MPN domain. Zn(2+) contacts are provided by His-127, His-129, Asp-140, His-142, Cys-185, His-191, and His-193. A JAMM motif motif is present at residues 127-140 (HTHPSQGCFMSSVD).

The protein belongs to the peptidase M67C family. Zn(2+) is required as a cofactor.

Its function is as follows. Zinc metalloprotease that cleaves 'Lys-48'- and 'Lys-63'-linked polyubiquitin chains. This Arabidopsis thaliana (Mouse-ear cress) protein is AMSH-like ubiquitin thioesterase 2 (AMSH2).